Consider the following 603-residue polypeptide: Geraniol synthase Tps-5073G30, chloroplastic (603 aa).

A chloroplast-targeting transit peptide spans 1 to 35 (MCSISQKVVIGLNKAAANNNLQNLDRRGFKTRCVS). Positions 319, 356, 360, 497, and 500 each coordinate (2E)-geranyl diphosphate. Mg(2+) is bound by residues aspartate 356 and aspartate 360. A DDXXD motif motif is present at residues 356–360 (DDVYD). 3 residues coordinate Mg(2+): aspartate 500, threonine 504, and glutamate 508.

It belongs to the terpene synthase family. Tpsb subfamily. As to quaternary structure, monomer. It depends on Mg(2+) as a cofactor. Mn(2+) serves as cofactor.

The protein resides in the plastid. The protein localises to the chloroplast. The catalysed reaction is (2E)-geranyl diphosphate + H2O = (2E)-geraniol + diphosphate. The protein operates within secondary metabolite biosynthesis; terpenoid biosynthesis. Its function is as follows. Monoterpene synthase (mono-TPS) involved in the biosynthesis of monoterpenes natural products. Catalyzes the conversion of (2E)-geranyl diphosphate (GPP) into geraniol. This chain is Geraniol synthase Tps-5073G30, chloroplastic, found in Perilla frutescens (Beefsteak mint).